We begin with the raw amino-acid sequence, 366 residues long: Autophagy-related protein 18b (366 aa).

WD repeat units follow at residues 6–44, 178–218, and 223–265; these read SLPS…LCYE, AHRS…KSYS, and TYPS…NQRS.

Belongs to the WD repeat PROPPIN family. In terms of assembly, component of the PI(3,5)P2 regulatory complex at least composed of ATG18, SAC/FIG4, FAB1 and VAC14. As to expression, expressed in roots, stems, flowers and leaves.

It is found in the preautophagosomal structure membrane. The protein localises to the vacuole membrane. The PI(3,5)P2 regulatory complex regulates both the synthesis and turnover of phosphatidylinositol 3,5-bisphosphate (PtdIns(3,5)P2). Required for autophagy. The protein is Autophagy-related protein 18b (ATG18B) of Arabidopsis thaliana (Mouse-ear cress).